The chain runs to 335 residues: Putative SWIB domain-containing protein R508 (335 aa).

The span at 1 to 12 (MSKRVTSSKKSK) shows a compositional bias: basic residues. A disordered region spans residues 1-182 (MSKRVTSSKK…NKKSPKKLLN (182 aa)). The segment covering 24–33 (KNLSKTSKSV) has biased composition (low complexity). Residues 60 to 75 (NIGGSKSSRTYNSEGS) are compositionally biased toward polar residues. The span at 83–109 (SSKDSKVIKKNKQKVESSDSEKHSENK) shows a compositional bias: basic and acidic residues. Basic residues predominate over residues 110–126 (SHKKSSKSSSISRKKPI). Basic and acidic residues predominate over residues 163 to 173 (KGEDNNDEKQN). Positions 181–217 (LNEKKISSESFDDKLNELREELRENYIRQKKIMNDIK) form a coiled coil. The SWIB/MDM2 domain maps to 244–326 (GFNKPQTVPQ…QTWLKKVYNE (83 aa)).

The sequence is that of Putative SWIB domain-containing protein R508 from Acanthamoeba polyphaga mimivirus (APMV).